Reading from the N-terminus, the 192-residue chain is Akirin-1 (192 aa).

A disordered region spans residues 17 to 71; that stretch reads LLSPGSPKRRRCAPLPGPTPGLRPPDAEPPPPFQTQTPPQSLQQPAPPGSERRLP. Serine 22 bears the Phosphoserine mark. A Nuclear localization signal motif is present at residues 23–28; the sequence is PKRRRC. A compositionally biased stretch (pro residues) spans 31-49; the sequence is LPGPTPGLRPPDAEPPPPF. Over residues 50 to 60 the composition is skewed to low complexity; that stretch reads QTQTPPQSLQQ. Phosphothreonine is present on threonine 72. The span at 104-122 shows a compositional bias: polar residues; sequence ASESQPHSSALTAPSSPGS. The tract at residues 104-127 is disordered; that stretch reads ASESQPHSSALTAPSSPGSSWMKK. The SYVS motif signature appears at 189–192; that stretch reads SYVS.

It belongs to the akirin family. Widely expressed with the highest expression in heart, liver, placenta and peripheral blood leukocytes.

It is found in the nucleus. In terms of biological role, molecular adapter that acts as a bridge between proteins, and which is involved skeletal muscle development. Functions as a signal transducer for MSTN during skeletal muscle regeneration and myogenesis. May regulate chemotaxis of both macrophages and myoblasts by reorganising actin cytoskeleton, leading to more efficient lamellipodia formation via a PI3 kinase dependent pathway. In contrast to AKIRIN2, not involved in nuclear import of proteasomes. This chain is Akirin-1, found in Homo sapiens (Human).